Here is a 369-residue protein sequence, read N- to C-terminus: MEESLLPVYIHSAEYVELCDNVQSKVPRRASMVHSLIEAYGLLKEMRVVKPKVASMEEMAAFHTDSYLQHLHKVSEEGDNDDPETLEYGLGYDCPITEGIYDYAAAVGGATLTAAEQLMAGKTRIAINWPGGWHHAKKDEASGFCYLNDAVLGILKLREKFDRVLYVDMDLHHGDGVEDAFSFTSKVMTVSLHKFSPGFFPGTGDVSDIGLGKGRYYSVNVPLQDGIQDEKYYQICEGVLKEVFTTFNPEAVVLQLGADTIAGDPMCSFNMTPQGIGKCLKYVLQWQLPTLILGGGGYHLPNTARCWTYLTALIVGRTLSSEIPDHEFFTEYGPDYVLEVTPSCRPDRNDSQKVQEILQSIKGHLKQVV.

The interval 5–316 is histone deacetylase; sequence LLPVYIHSAE…WTYLTALIVG (312 aa). Residue Asp-93 coordinates substrate. His-135 (proton acceptor) is an active-site residue. Gly-143 provides a ligand contact to substrate. The a divalent metal cation site is built by Asp-170, His-172, and Asp-259. Tyr-298 is a binding site for substrate.

It belongs to the histone deacetylase family. HD type 1 subfamily. A divalent metal cation is required as a cofactor.

It localises to the nucleus. Its subcellular location is the chromosome. The protein localises to the cytoplasm. It carries out the reaction N(6)-acetyl-L-lysyl-[histone] + H2O = L-lysyl-[histone] + acetate. The catalysed reaction is N(6)-acetyl-L-lysyl-[protein] + H2O = L-lysyl-[protein] + acetate. The enzyme catalyses N(6)-(2E)-butenoyl-L-lysyl-[protein] + H2O = (2E)-2-butenoate + L-lysyl-[protein]. With respect to regulation, its activity is inhibited by trichostatin A (TSA) and butyrate, 2 well known histone deacetylase inhibitors. Functionally, histone deacetylase that catalyzes the deacetylation of lysine residues on the N-terminal part of the core histones (H2A, H2B, H3 and H4). Histone deacetylation gives a tag for epigenetic repression and plays an important role in transcriptional regulation, cell cycle progression and developmental events. Histone deacetylases act via the formation of large multiprotein complexes. Also involved in the deacetylation of non-histone proteins. In addition to protein deacetylase activity, also has protein-lysine deacylase activity: acts as a protein decrotonylase by mediating decrotonylation ((2E)-butenoyl) of histones. This Xenopus tropicalis (Western clawed frog) protein is Histone deacetylase 8 (hdac8).